Reading from the N-terminus, the 561-residue chain is ATP-dependent rRNA helicase RRP3 (561 aa).

Composition is skewed to low complexity over residues 1–23 (MPKASASSAKMTASTSNVSSSNS) and 30–45 (ASSPSASPEVSTPSTS). The disordered stretch occupies residues 1-109 (MPKASASSAK…DEKKVATIAD (109 aa)). Basic and acidic residues predominate over residues 100–109 (DEKKVATIAD). The Q motif signature appears at 114–142 (VEFSDLGVIPQIVEACTNMGFKHPTPIQV). Residues 145-316 (IPEALQARDV…RASLKNPVRV (172 aa)) enclose the Helicase ATP-binding domain. 158–165 (AQTGSGKT) lines the ATP pocket. Positions 264-267 (DEAD) match the DEAD box motif. The Helicase C-terminal domain maps to 339–487 (HKDTYLVHLA…EFPGGNDKEA (149 aa)). The disordered stretch occupies residues 506–561 (LKDKGVGSAGGSGKRKRKMDGKYGDDMDRDDDQVQAGLPVSGNGRHQNQNRKKGRR).

This sequence belongs to the DEAD box helicase family. DDX47/RRP3 subfamily. Interacts with the SSU processome.

Its subcellular location is the nucleus. The catalysed reaction is ATP + H2O = ADP + phosphate + H(+). Its function is as follows. ATP-dependent rRNA helicase required for pre-ribosomal RNA processing. Involved in the maturation of the 35S-pre-rRNA and to its cleavage to mature 18S rRNA. The polypeptide is ATP-dependent rRNA helicase RRP3 (Mycosarcoma maydis (Corn smut fungus)).